The following is a 118-amino-acid chain: Large ribosomal subunit protein uL24 (118 aa).

This sequence belongs to the universal ribosomal protein uL24 family. In terms of assembly, part of the 50S ribosomal subunit.

In terms of biological role, one of two assembly initiator proteins, it binds directly to the 5'-end of the 23S rRNA, where it nucleates assembly of the 50S subunit. Its function is as follows. One of the proteins that surrounds the polypeptide exit tunnel on the outside of the subunit. This Synechococcus sp. (strain CC9605) protein is Large ribosomal subunit protein uL24.